Reading from the N-terminus, the 175-residue chain is dATP triphosphohydrolase (175 aa).

Arginine 19 provides a ligand contact to dATP. Residues histidine 34, histidine 66, aspartate 67, glutamate 70, aspartate 75, and aspartate 119 each contribute to the Co(2+) site.

This sequence belongs to the Caudovirales dATP triphosphohydrolase family. Homohexamer. Requires Co(2+) as cofactor. It depends on Zn(2+) as a cofactor.

The catalysed reaction is dATP + H2O = 2'-deoxyadenosine + triphosphate + H(+). The enzyme catalyses dADP + H2O = 2'-deoxyadenosine + diphosphate. It carries out the reaction dAMP + H2O = 2'-deoxyadenosine + phosphate. Its function is as follows. Catalyzes the hydrolysis of dATP, dADP and dAMP into dA. This step is essential for Z-genome synthesis (containing aminoadenine instead of adenine). Specifically removes dATP and its precursor dADP from the nucleotide pool of the host, preventing the incorporation of A into the phage genome and favoring the integration of the Z-base into the viral genome. The sequence is that of dATP triphosphohydrolase (datZ) from Cyanophage S-2L (Cyanobacteria phage S-2L).